A 511-amino-acid chain; its full sequence is ATP synthase subunit alpha, mitochondrial (511 aa).

Position 171–178 (171–178) interacts with ATP; the sequence is GDRQTGKT.

Belongs to the ATPase alpha/beta chains family. F-type ATPases have 2 components, CF(1) - the catalytic core - and CF(0) - the membrane proton channel. CF(1) has five subunits: alpha(3), beta(3), gamma(1), delta(1), epsilon(1). CF(0) has three main subunits: a, b and c.

It localises to the mitochondrion. The protein localises to the mitochondrion inner membrane. In terms of biological role, mitochondrial membrane ATP synthase (F(1)F(0) ATP synthase or Complex V) produces ATP from ADP in the presence of a proton gradient across the membrane which is generated by electron transport complexes of the respiratory chain. F-type ATPases consist of two structural domains, F(1) - containing the extramembraneous catalytic core, and F(0) - containing the membrane proton channel, linked together by a central stalk and a peripheral stalk. During catalysis, ATP synthesis in the catalytic domain of F(1) is coupled via a rotary mechanism of the central stalk subunits to proton translocation. Subunits alpha and beta form the catalytic core in F(1). Rotation of the central stalk against the surrounding alpha(3)beta(3) subunits leads to hydrolysis of ATP in three separate catalytic sites on the beta subunits. Subunit alpha does not bear the catalytic high-affinity ATP-binding sites. This Oenothera biennis (German evening primrose) protein is ATP synthase subunit alpha, mitochondrial (ATPA).